Reading from the N-terminus, the 287-residue chain is MNLITLLVLGVSTCLIYGIEADEKTSSALENEIVEILNGNFKNEKKSIETSDQWLKGRFGREVNQWLKGRFGRELSDQWLKGRFGRELSDQWLKGRFGREVLDQWLKGRFGRDASNQWLKGRFGRELSDQWLKGRFGREGSNQWLKGRFGREASKNDLEKQNGRGDSDQWLKGRFGREARKQLLGGRFGRKDMNQLLAERHGRETSDQWLKGRFGRQLSDQWLKGRFGREVKNDKNNPFRSRYTGDSTQLQRENNQPIEELRDNTEKVSIENKPIMKKTSVKISKTV.

Positions 1 to 21 (MNLITLLVLGVSTCLIYGIEA) are cleaved as a signal peptide. The propeptide occupies 22-52 (DEKTSSALENEIVEILNGNFKNEKKSIETSD). Glutamine 53 is subject to Pyrrolidone carboxylic acid. Phenylalanine amide is present on phenylalanine 59. The propeptide occupies 62-64 (EVN). Glutamine 65 carries the pyrrolidone carboxylic acid modification. Phenylalanine 71 bears the Phenylalanine amide mark. Residues 74-77 (ELSD) constitute a propeptide that is removed on maturation. Glutamine 78 bears the Pyrrolidone carboxylic acid mark. Phenylalanine amide is present on phenylalanine 84. A propeptide spanning residues 87-90 (ELSD) is cleaved from the precursor. A Pyrrolidone carboxylic acid modification is found at glutamine 91. At phenylalanine 97 the chain carries Phenylalanine amide. Residues 100–103 (EVLD) constitute a propeptide that is removed on maturation. Glutamine 104 is subject to Pyrrolidone carboxylic acid. Phenylalanine 110 carries the post-translational modification Phenylalanine amide. The propeptide occupies 113–116 (DASN). Residue glutamine 117 is modified to Pyrrolidone carboxylic acid. Phenylalanine 123 bears the Phenylalanine amide mark. Residues 126 to 129 (ELSD) constitute a propeptide that is removed on maturation. A Pyrrolidone carboxylic acid modification is found at glutamine 130. At phenylalanine 136 the chain carries Phenylalanine amide. Positions 139-142 (EGSN) are excised as a propeptide. The residue at position 143 (glutamine 143) is a Pyrrolidone carboxylic acid. The residue at position 149 (phenylalanine 149) is a Phenylalanine amide. A propeptide spanning residues 152–168 (EASKNDLEKQNGRGDSD) is cleaved from the precursor. Glutamine 169 is subject to Pyrrolidone carboxylic acid. Position 175 is a phenylalanine amide (phenylalanine 175). The propeptide occupies 178 to 181 (EARK). Glutamine 182 is modified (pyrrolidone carboxylic acid). Phenylalanine 188 is subject to Phenylalanine amide. Positions 192–194 (DMN) are excised as a propeptide. Glutamine 195 bears the Pyrrolidone carboxylic acid mark. Histidine 201 carries the histidine amide modification. The propeptide occupies 204-207 (ETSD). At glutamine 208 the chain carries Pyrrolidone carboxylic acid. Residue phenylalanine 214 is modified to Phenylalanine amide. A propeptide spanning residues 217 to 220 (QLSD) is cleaved from the precursor. The residue at position 221 (glutamine 221) is a Pyrrolidone carboxylic acid. Phenylalanine amide is present on phenylalanine 227. Residues 229-267 (REVKNDKNNPFRSRYTGDSTQLQRENNQPIEELRDNTEK) form a disordered region. The propeptide occupies 230-287 (EVKNDKNNPFRSRYTGDSTQLQRENNQPIEELRDNTEKVSIENKPIMKKTSVKISKTV). The span at 238–257 (PFRSRYTGDSTQLQRENNQP) shows a compositional bias: polar residues.

It belongs to the FARP (FMRFamide related peptide) family. Post-translationally, the N-terminal processing sites of the Pol-RFamide peptides are acidic suggesting that cniderian nervous systems may use a variety of unconventional processing procedures.

The protein resides in the secreted. Has direct action on motoneurons, and effect includes transient inhibition followed by prolonged excitation. In Polyorchis penicillatus (Hydromedusa), this protein is Pol-RFamide neuropeptides.